Here is a 367-residue protein sequence, read N- to C-terminus: Phosphoribosylaminoimidazole-succinocarboxamide synthase (367 aa).

The protein belongs to the SAICAR synthetase family.

The catalysed reaction is 5-amino-1-(5-phospho-D-ribosyl)imidazole-4-carboxylate + L-aspartate + ATP = (2S)-2-[5-amino-1-(5-phospho-beta-D-ribosyl)imidazole-4-carboxamido]succinate + ADP + phosphate + 2 H(+). The protein operates within purine metabolism; IMP biosynthesis via de novo pathway; 5-amino-1-(5-phospho-D-ribosyl)imidazole-4-carboxamide from 5-amino-1-(5-phospho-D-ribosyl)imidazole-4-carboxylate: step 1/2. This Shewanella baltica (strain OS195) protein is Phosphoribosylaminoimidazole-succinocarboxamide synthase.